The primary structure comprises 305 residues: Methionyl-tRNA formyltransferase (305 aa).

Residue serine 111–proline 114 participates in (6S)-5,6,7,8-tetrahydrofolate binding.

It belongs to the Fmt family.

It carries out the reaction L-methionyl-tRNA(fMet) + (6R)-10-formyltetrahydrofolate = N-formyl-L-methionyl-tRNA(fMet) + (6S)-5,6,7,8-tetrahydrofolate + H(+). In terms of biological role, attaches a formyl group to the free amino group of methionyl-tRNA(fMet). The formyl group appears to play a dual role in the initiator identity of N-formylmethionyl-tRNA by promoting its recognition by IF2 and preventing the misappropriation of this tRNA by the elongation apparatus. This Helicobacter acinonychis (strain Sheeba) protein is Methionyl-tRNA formyltransferase.